The primary structure comprises 334 residues: Putative peptide import ATP-binding protein BAB2_1053 (334 aa).

Residues 22–272 (VRTDDLVRDF…PLHPYSRALL (251 aa)) form the ABC transporter domain. 64 to 71 (GESGSGKS) is an ATP binding site.

It belongs to the ABC transporter superfamily. As to quaternary structure, the complex is composed of two ATP-binding proteins (BAB2_1052 and BAB2_1053), two transmembrane proteins (BAB2_1050 and BAB2_1051) and a solute-binding protein (BAB2_1049).

The protein resides in the cell inner membrane. In terms of biological role, probably part of an ABC transporter complex that could be involved in peptide import. Probably responsible for energy coupling to the transport system. The sequence is that of Putative peptide import ATP-binding protein BAB2_1053 from Brucella abortus (strain 2308).